Consider the following 158-residue polypeptide: RNA pyrophosphohydrolase (158 aa).

One can recognise a Nudix hydrolase domain in the interval 6–150; that stretch reads GYRLNVGIVL…KRDVYRKVMQ (145 aa). Positions 39-60 match the Nudix box motif; it reads GGINIGETPEQAMYRELFEEIG.

The protein belongs to the Nudix hydrolase family. RppH subfamily. The cofactor is a divalent metal cation.

Accelerates the degradation of transcripts by removing pyrophosphate from the 5'-end of triphosphorylated RNA, leading to a more labile monophosphorylated state that can stimulate subsequent ribonuclease cleavage. This is RNA pyrophosphohydrolase from Blochmanniella pennsylvanica (strain BPEN).